The following is a 490-amino-acid chain: Betaine aldehyde dehydrogenase (490 aa).

T26, I27, and D93 together coordinate K(+). An NAD(+)-binding site is contributed by 150-152 (GAW). K162 (charge relay system) is an active-site residue. An NAD(+)-binding site is contributed by 176–179 (KPSE). V180 is a K(+) binding site. NAD(+) is bound at residue 230 to 233 (GVAS). L246 serves as a coordination point for K(+). E252 serves as the catalytic Proton acceptor. G254, C286, and E387 together coordinate NAD(+). C286 acts as the Nucleophile in catalysis. C286 carries the cysteine sulfenic acid (-SOH) modification. The K(+) site is built by K457 and G460. E464 functions as the Charge relay system in the catalytic mechanism.

It belongs to the aldehyde dehydrogenase family. As to quaternary structure, dimer of dimers. K(+) serves as cofactor.

The enzyme catalyses betaine aldehyde + NAD(+) + H2O = glycine betaine + NADH + 2 H(+). It functions in the pathway amine and polyamine biosynthesis; betaine biosynthesis via choline pathway; betaine from betaine aldehyde: step 1/1. Its function is as follows. Involved in the biosynthesis of the osmoprotectant glycine betaine. Catalyzes the irreversible oxidation of betaine aldehyde to the corresponding acid. This Escherichia coli O157:H7 protein is Betaine aldehyde dehydrogenase.